The primary structure comprises 201 residues: Large ribosomal subunit protein uL4 (201 aa).

A disordered region spans residues 51-73 (EVTGSGKKPWRQKGTGRARAGSV).

This sequence belongs to the universal ribosomal protein uL4 family. In terms of assembly, part of the 50S ribosomal subunit.

Its function is as follows. One of the primary rRNA binding proteins, this protein initially binds near the 5'-end of the 23S rRNA. It is important during the early stages of 50S assembly. It makes multiple contacts with different domains of the 23S rRNA in the assembled 50S subunit and ribosome. Functionally, forms part of the polypeptide exit tunnel. The polypeptide is Large ribosomal subunit protein uL4 (Erwinia tasmaniensis (strain DSM 17950 / CFBP 7177 / CIP 109463 / NCPPB 4357 / Et1/99)).